Reading from the N-terminus, the 226-residue chain is Ribose-5-phosphate isomerase A (226 aa).

Residues 33–36 (TGST), 86–89 (DGAD), and 99–102 (KGGG) each bind substrate. Glu108 (proton acceptor) is an active-site residue. Lys126 lines the substrate pocket.

It belongs to the ribose 5-phosphate isomerase family. As to quaternary structure, homodimer.

The enzyme catalyses aldehydo-D-ribose 5-phosphate = D-ribulose 5-phosphate. It functions in the pathway carbohydrate degradation; pentose phosphate pathway; D-ribose 5-phosphate from D-ribulose 5-phosphate (non-oxidative stage): step 1/1. Functionally, catalyzes the reversible conversion of ribose-5-phosphate to ribulose 5-phosphate. In Bordetella bronchiseptica (strain ATCC BAA-588 / NCTC 13252 / RB50) (Alcaligenes bronchisepticus), this protein is Ribose-5-phosphate isomerase A.